Here is a 186-residue protein sequence, read N- to C-terminus: Phosphoheptose isomerase (186 aa).

Residues 33–186 (LCECLKKGGK…TLCQIIDEGF (154 aa)) form the SIS domain. 48–50 (NGG) is a substrate binding site. Residues His-57 and Glu-61 each contribute to the Zn(2+) site. Substrate is bound by residues Glu-61, 90-91 (ND), 116-118 (STS), Ser-121, and Gln-168. Residues Gln-168 and His-176 each contribute to the Zn(2+) site.

This sequence belongs to the SIS family. GmhA subfamily. As to quaternary structure, homotetramer. It depends on Zn(2+) as a cofactor.

Its subcellular location is the cytoplasm. It catalyses the reaction 2 D-sedoheptulose 7-phosphate = D-glycero-alpha-D-manno-heptose 7-phosphate + D-glycero-beta-D-manno-heptose 7-phosphate. Its pathway is carbohydrate biosynthesis; D-glycero-D-manno-heptose 7-phosphate biosynthesis; D-glycero-alpha-D-manno-heptose 7-phosphate and D-glycero-beta-D-manno-heptose 7-phosphate from sedoheptulose 7-phosphate: step 1/1. In terms of biological role, catalyzes the isomerization of sedoheptulose 7-phosphate in D-glycero-D-manno-heptose 7-phosphate. This Campylobacter jejuni subsp. jejuni serotype O:6 (strain 81116 / NCTC 11828) protein is Phosphoheptose isomerase.